The following is a 50-amino-acid chain: Photosystem II reaction center protein M (50 aa).

The helical transmembrane segment at 7–27 threads the bilayer; it reads GFIASLLFVGVPTIFLIGLFI.

This sequence belongs to the PsbM family. PSII is composed of 1 copy each of membrane proteins PsbA, PsbB, PsbC, PsbD, PsbE, PsbF, PsbH, PsbI, PsbJ, PsbK, PsbL, PsbM, PsbT, PsbX, PsbY, Psb30/Ycf12, peripheral proteins PsbO, CyanoQ (PsbQ), PsbU, PsbV and a large number of cofactors. It forms dimeric complexes.

The protein localises to the cellular thylakoid membrane. Its function is as follows. One of the components of the core complex of photosystem II (PSII). PSII is a light-driven water:plastoquinone oxidoreductase that uses light energy to abstract electrons from H(2)O, generating O(2) and a proton gradient subsequently used for ATP formation. It consists of a core antenna complex that captures photons, and an electron transfer chain that converts photonic excitation into a charge separation. This subunit is found at the monomer-monomer interface. In Prochlorococcus marinus (strain MIT 9312), this protein is Photosystem II reaction center protein M.